We begin with the raw amino-acid sequence, 418 residues long: Inner capsid protein sigma-2 (418 aa).

The protein belongs to the orthoreovirus sigma-1 protein family. As to quaternary structure, interacts with protein mu-NS; in viral inclusions.

Its subcellular location is the virion. Inner capsid (core) component. This chain is Inner capsid protein sigma-2 (S2), found in Mammalia (T2J).